The chain runs to 426 residues: Mothers against decapentaplegic homolog 7 (426 aa).

The segment at 14–42 is disordered; sequence WRSRAPGGEDEEEGVGGGGGGGELRGEGA. Lys64 and Lys70 each carry N6-acetyllysine; alternate. Glycyl lysine isopeptide (Lys-Gly) (interchain with G-Cter in ubiquitin); alternate cross-links involve residues Lys64 and Lys70. Residues 64–207 enclose the MH1 domain; the sequence is KAVRGAKGHH…LSRLCELESP (144 aa). A compositionally biased stretch (basic residues) spans 67-76; the sequence is RGAKGHHHPH. The tract at residues 67–87 is disordered; it reads RGAKGHHHPHPPTSGAGAAGG. The Zn(2+) site is built by Cys125, Cys180, Cys192, and His197. The PY-motif signature appears at 208–211; it reads PPPY. The interval 208–217 is important for interaction with SMURF2; the sequence is PPPYSRYPMD. Ser249 carries the phosphoserine modification. Residues 261-426 form the MH2 domain; it reads WCVVAYWEEK…CWLEVIFNSR (166 aa).

Belongs to the dwarfin/SMAD family. In terms of assembly, interacts with COPS5. Interacts with STAMBP. Interacts with PPP1R15A. Interacts with NEDD4L. Interacts with RNF111, AXIN1 and AXIN2. Interacts with ACVR1B, SMURF1, SMURF2 and TGFBR1; SMAD7 recruits SMURF1 and SMURF2 to the TGF-beta receptor and regulates its degradation. Interacts with WWP1. Interacts with PDPK1 (via PH domain). Ubiquitinated by WWP1. Interacts with TSC22D1/TSC-22; the interaction requires TGF-beta and the interaction is inhibited by TGFBR1. Phosphorylation on Ser-249 does not affect its stability, nuclear localization or inhibitory function in TGFB signaling; however it affects its ability to regulate transcription. Phosphorylated by PDPK1. Post-translationally, ubiquitinated by WWP1. Polyubiquitinated by RNF111, which is enhanced by AXIN1 and promotes proteasomal degradation. In response to TGF-beta, ubiquitinated by SMURF1; which promotes its degradation. Ubiquitinated by ARK2C, promoting proteasomal degradation, leading to enhance the BMP-Smad signaling. In terms of processing, acetylation prevents ubiquitination and degradation mediated by SMURF1. In terms of tissue distribution, ubiquitous in various organs, with higher levels in brain and kidney.

It localises to the nucleus. It is found in the cytoplasm. Antagonist of signaling by TGF-beta (transforming growth factor) type 1 receptor superfamily members; has been shown to inhibit TGF-beta (Transforming growth factor) and activin signaling by associating with their receptors thus preventing SMAD2 access. Functions as an adapter to recruit SMURF2 to the TGF-beta receptor complex. Also acts by recruiting the PPP1R15A-PP1 complex to TGFBR1, which promotes its dephosphorylation. Positively regulates PDPK1 kinase activity by stimulating its dissociation from the 14-3-3 protein YWHAQ which acts as a negative regulator. In Mus musculus (Mouse), this protein is Mothers against decapentaplegic homolog 7 (Smad7).